Consider the following 252-residue polypeptide: Imidazole glycerol phosphate synthase subunit HisF (252 aa).

Residues D11 and D130 contribute to the active site.

It belongs to the HisA/HisF family. As to quaternary structure, heterodimer of HisH and HisF.

It localises to the cytoplasm. The catalysed reaction is 5-[(5-phospho-1-deoxy-D-ribulos-1-ylimino)methylamino]-1-(5-phospho-beta-D-ribosyl)imidazole-4-carboxamide + L-glutamine = D-erythro-1-(imidazol-4-yl)glycerol 3-phosphate + 5-amino-1-(5-phospho-beta-D-ribosyl)imidazole-4-carboxamide + L-glutamate + H(+). It functions in the pathway amino-acid biosynthesis; L-histidine biosynthesis; L-histidine from 5-phospho-alpha-D-ribose 1-diphosphate: step 5/9. In terms of biological role, IGPS catalyzes the conversion of PRFAR and glutamine to IGP, AICAR and glutamate. The HisF subunit catalyzes the cyclization activity that produces IGP and AICAR from PRFAR using the ammonia provided by the HisH subunit. This Pelotomaculum thermopropionicum (strain DSM 13744 / JCM 10971 / SI) protein is Imidazole glycerol phosphate synthase subunit HisF.